We begin with the raw amino-acid sequence, 581 residues long: MITRLSHLFLRTLRDDPADAEVPSHKLLVRAGYVRRIAPGVYSWLPLGLRVLREVERVVREEMNGIGAQEISLPALLPREPYEASNRWTEYGDGLFRLKDRKGGDYLLGPTHEELFALTVKGEYNSYKDFPVTLYQVQTKYRDEERPRAGILRGREFVMKDSYSFDLTDEGLTASYRAHRDAYERIFSRLGVKYVIVSATSGAMGGSASEEFLAESEIGEDTYVRCLESGYAANVEAVKTLAPEAVPFDGLPAAKVHDTPDTPTIATLVDWANGADLGWTVTAADTLKNILVKTRQPGGKWELLGIGVPGDREVDDKRLGASLEPAEFELLTEADFAANPFLVKGYIGPKALQANGVRYLVDPRIVDGTSWITGADEPGKHVVGLVAGRDFTPDGTIEAAEVRDGDPSPDGAGALVAARGIEIGHVFQLGRKYTDVFSVDVLGENGKPVRPTMGSYGVGVSRLVAVIAEQHHDEKGLRWPAEVSPADVHVVIANKDETAREGAEGLAAELDKAGLEVILDDRKASPGVKFKDSELLGVPLVVVVGRGWGEGKVEVRDRFTGESREVAAESALSEIVKAVRG.

The protein belongs to the class-II aminoacyl-tRNA synthetase family. ProS type 1 subfamily. In terms of assembly, homodimer.

It is found in the cytoplasm. It catalyses the reaction tRNA(Pro) + L-proline + ATP = L-prolyl-tRNA(Pro) + AMP + diphosphate. Catalyzes the attachment of proline to tRNA(Pro) in a two-step reaction: proline is first activated by ATP to form Pro-AMP and then transferred to the acceptor end of tRNA(Pro). As ProRS can inadvertently accommodate and process non-cognate amino acids such as alanine and cysteine, to avoid such errors it has two additional distinct editing activities against alanine. One activity is designated as 'pretransfer' editing and involves the tRNA(Pro)-independent hydrolysis of activated Ala-AMP. The other activity is designated 'posttransfer' editing and involves deacylation of mischarged Ala-tRNA(Pro). The misacylated Cys-tRNA(Pro) is not edited by ProRS. The chain is Proline--tRNA ligase 1 from Rhodococcus jostii (strain RHA1).